The sequence spans 316 residues: Transaldolase A (316 aa).

The active-site Schiff-base intermediate with substrate is K131.

This sequence belongs to the transaldolase family. Type 1 subfamily. In terms of assembly, homodimer.

Its subcellular location is the cytoplasm. The enzyme catalyses D-sedoheptulose 7-phosphate + D-glyceraldehyde 3-phosphate = D-erythrose 4-phosphate + beta-D-fructose 6-phosphate. It participates in carbohydrate degradation; pentose phosphate pathway; D-glyceraldehyde 3-phosphate and beta-D-fructose 6-phosphate from D-ribose 5-phosphate and D-xylulose 5-phosphate (non-oxidative stage): step 2/3. In terms of biological role, transaldolase is important for the balance of metabolites in the pentose-phosphate pathway. The chain is Transaldolase A from Salmonella typhimurium (strain LT2 / SGSC1412 / ATCC 700720).